Here is a 171-residue protein sequence, read N- to C-terminus: Tetratricopeptide repeat protein 9C (171 aa).

TPR repeat units follow at residues 8–41, 72–107, and 108–141; these read AQLY…LRGL, TDCY…QPEN, and AKAL…QPKD.

This sequence belongs to the TTC9 family.

This Rattus norvegicus (Rat) protein is Tetratricopeptide repeat protein 9C (Ttc9c).